The following is a 182-amino-acid chain: Segregation and condensation protein B (182 aa).

This sequence belongs to the ScpB family. As to quaternary structure, homodimer. Homodimerization may be required to stabilize the binding of ScpA to the Smc head domains. Component of a cohesin-like complex composed of ScpA, ScpB and the Smc homodimer, in which ScpA and ScpB bind to the head domain of Smc. The presence of the three proteins is required for the association of the complex with DNA.

It localises to the cytoplasm. Its function is as follows. Participates in chromosomal partition during cell division. May act via the formation of a condensin-like complex containing Smc and ScpA that pull DNA away from mid-cell into both cell halves. This chain is Segregation and condensation protein B, found in Staphylococcus saprophyticus subsp. saprophyticus (strain ATCC 15305 / DSM 20229 / NCIMB 8711 / NCTC 7292 / S-41).